The following is a 59-amino-acid chain: MKMRVVSFKAEEDLLVLLDRYAMKYKLNRSEAIRKAIENLVKDEVSEGTVARVEKILLW.

This is an uncharacterized protein from Acidianus convivator (ATV).